The chain runs to 227 residues: Ras-related protein Rab-3C (227 aa).

GTP contacts are provided by S39, G42, K43, T44, S45, T56, S57, S61, and T62. Mg(2+) is bound at residue T44. Residues 53-66 (DSFTSAFVSTVGID) carry the Switch 1 motif. Mg(2+) is bound by residues T62 and D85. T86 carries the phosphothreonine; by LRRK2 modification. The Switch 2 signature appears at 86–104 (TAGQERYRTITTAYYRGAM). 6 residues coordinate GTP: G88, N143, K144, D146, A174, and K175. A phosphoserine mark is found at S196 and S198. Positions 202 to 227 (DPAITAAKQSTRLKETPPPPQPNCGC) are disordered. Position 206 is a phosphothreonine (T206). Positions 217–227 (TPPPPQPNCGC) are enriched in pro residues. S-geranylgeranyl cysteine attachment occurs at residues C225 and C227. Cysteine methyl ester is present on C227.

Belongs to the small GTPase superfamily. Rab family. Interacts with RIMS1, RIMS2, RPH3A and RPH3AL. Interacts with GDI2, CHM and CHML; phosphorylation at Thr-86 disrupts these interactions. Interacts with MADD (via uDENN domain); the GTP-bound form is preferred for interaction. Requires Mg(2+) as cofactor. Phosphorylation of Thr-86 in the switch II region by LRRK2 prevents the association of RAB regulatory proteins, including CHM, CHML and RAB GDP dissociation inhibitor GDI2.

The protein localises to the cell membrane. It carries out the reaction GTP + H2O = GDP + phosphate + H(+). With respect to regulation, regulated by guanine nucleotide exchange factors (GEFs) which promote the exchange of bound GDP for free GTP. Regulated by GTPase activating proteins (GAPs) which increase the GTP hydrolysis activity. Inhibited by GDP dissociation inhibitors (GDIs) which prevent Rab-GDP dissociation. Its function is as follows. The small GTPases Rab are key regulators of intracellular membrane trafficking, from the formation of transport vesicles to their fusion with membranes. Rabs cycle between an inactive GDP-bound form and an active GTP-bound form that is able to recruit to membranes different sets of downstream effectors directly responsible for vesicle formation, movement, tethering and fusion. The protein is Ras-related protein Rab-3C of Mus musculus (Mouse).